Here is a 303-residue protein sequence, read N- to C-terminus: 4-hydroxy-tetrahydrodipicolinate synthase (303 aa).

Thr-57 contacts pyruvate. Tyr-143 (proton donor/acceptor) is an active-site residue. Residue Lys-171 is the Schiff-base intermediate with substrate of the active site. Ile-211 is a binding site for pyruvate.

The protein belongs to the DapA family. Homotetramer; dimer of dimers.

The protein resides in the cytoplasm. The enzyme catalyses L-aspartate 4-semialdehyde + pyruvate = (2S,4S)-4-hydroxy-2,3,4,5-tetrahydrodipicolinate + H2O + H(+). Its pathway is amino-acid biosynthesis; L-lysine biosynthesis via DAP pathway; (S)-tetrahydrodipicolinate from L-aspartate: step 3/4. Functionally, catalyzes the condensation of (S)-aspartate-beta-semialdehyde [(S)-ASA] and pyruvate to 4-hydroxy-tetrahydrodipicolinate (HTPA). The chain is 4-hydroxy-tetrahydrodipicolinate synthase from Bifidobacterium animalis subsp. lactis (strain AD011).